The following is a 106-amino-acid chain: Urease subunit beta (106 aa).

Belongs to the urease beta subunit family. As to quaternary structure, heterotrimer of UreA (gamma), UreB (beta) and UreC (alpha) subunits. Three heterotrimers associate to form the active enzyme.

It is found in the cytoplasm. It carries out the reaction urea + 2 H2O + H(+) = hydrogencarbonate + 2 NH4(+). The protein operates within nitrogen metabolism; urea degradation; CO(2) and NH(3) from urea (urease route): step 1/1. The protein is Urease subunit beta of Synechococcus sp. (strain CC9605).